The following is a 182-amino-acid chain: Bifunctional protein PyrR (182 aa).

The short motif at 99–111 (VVLVDDVLFTGRT) is the PRPP-binding element.

Belongs to the purine/pyrimidine phosphoribosyltransferase family. PyrR subfamily.

The enzyme catalyses UMP + diphosphate = 5-phospho-alpha-D-ribose 1-diphosphate + uracil. Regulates the transcription of the pyrimidine nucleotide (pyr) operon in response to exogenous pyrimidines. In terms of biological role, also displays a weak uracil phosphoribosyltransferase activity which is not physiologically significant. This Chloroflexus aurantiacus (strain ATCC 29366 / DSM 635 / J-10-fl) protein is Bifunctional protein PyrR.